We begin with the raw amino-acid sequence, 215 residues long: Adenylate kinase (215 aa).

ATP is bound at residue 10 to 15 (GAGKGT). Residues 30 to 59 (STGDMLRAAIKAGTPLGLEAKKIIDEGGLV) are NMP. AMP contacts are provided by residues Thr-31, Arg-36, 57–59 (GLV), 85–88 (GFPR), and Gln-92. The segment at 122–159 (GRRVHLASGRTYHVTYNPPKVEGKDDVTGEDLIQRDDD) is LID. ATP-binding positions include Arg-123 and 132–133 (TY). The AMP site is built by Arg-156 and Arg-167. Gln-200 contacts ATP.

The protein belongs to the adenylate kinase family. In terms of assembly, monomer.

It localises to the cytoplasm. The catalysed reaction is AMP + ATP = 2 ADP. It functions in the pathway purine metabolism; AMP biosynthesis via salvage pathway; AMP from ADP: step 1/1. Its function is as follows. Catalyzes the reversible transfer of the terminal phosphate group between ATP and AMP. Plays an important role in cellular energy homeostasis and in adenine nucleotide metabolism. The sequence is that of Adenylate kinase from Neisseria meningitidis serogroup C (strain 053442).